The chain runs to 205 residues: Probable GTP-binding protein EngB (205 aa).

Residues 27-201 (TGIEIAFAGR…AAKLDFWFSP (175 aa)) form the EngB-type G domain. Residues 35–42 (GRSNAGKS), 62–66 (GRTQL), 80–83 (DLPG), 147–150 (TKAD), and 180–182 (FSA) each bind GTP. Residues S42 and T64 each coordinate Mg(2+).

Belongs to the TRAFAC class TrmE-Era-EngA-EngB-Septin-like GTPase superfamily. EngB GTPase family. The cofactor is Mg(2+).

Its function is as follows. Necessary for normal cell division and for the maintenance of normal septation. This is Probable GTP-binding protein EngB from Haemophilus influenzae (strain PittEE).